The chain runs to 296 residues: MTFKYHKVAIVGKHYKKEVSQMVETLYAYLQQQGLEIIIENDTAADTSLVNVAIASLKEIALRCDVAIVVGGDGNFLKASRLLALYSNIPVIGINKGKLGFLTTLAADDNALKNDLYAILKGDSSVTKMSMLKYRVDNNLRAPLEASIALNEIAITASRGLMFGLKVFIDGRYAFDQRGDGLIVSTPTGSTAHAMSAGGPILNPNQNSVVLVPICSHSLNSRPLVISDESVIDIYITDYNDPESVLSIDGRHDTILKAHQKVTIQKARKKVTVLHTKDYNYYDTLREKLGWSKVLF.

The active-site Proton acceptor is the D73. Residues 73 to 74 (DG), K78, 151 to 152 (NE), R178, D180, and 191 to 196 (TAHAMS) contribute to the NAD(+) site.

The protein belongs to the NAD kinase family. A divalent metal cation is required as a cofactor.

Its subcellular location is the cytoplasm. The catalysed reaction is NAD(+) + ATP = ADP + NADP(+) + H(+). In terms of biological role, involved in the regulation of the intracellular balance of NAD and NADP, and is a key enzyme in the biosynthesis of NADP. Catalyzes specifically the phosphorylation on 2'-hydroxyl of the adenosine moiety of NAD to yield NADP. The sequence is that of NAD kinase from Francisella tularensis subsp. tularensis (strain FSC 198).